The sequence spans 310 residues: MTDTPNQLPPWRGSVSLDFELAADGTTQWQGGARSPLKLLRHFTAGDGRCVMPLLHTAGGLVGGDQLEIALHAAAGSRSFLTSVAAQKIYGSRGRSRVQPQGRWAQITLQAELEAGADLEWLPQETVVFAGALLEQQQQITVAPGASWLGADVVRLGRTARGEDLGAGRFCNSLSIRRGEQWSVVERLSLEQEQLPNPHGMGGEPVLGTLIWIAPEPLENEQLAQLLKGGRADREGLSGTMAIGPLEPGLIARYRGGSSQAARLWFFRLWRRIRAVQGLSEPSWPRTWPFQEAELALNPEPATTATTAAR.

The protein belongs to the UreD family. In terms of assembly, ureD, UreF and UreG form a complex that acts as a GTP-hydrolysis-dependent molecular chaperone, activating the urease apoprotein by helping to assemble the nickel containing metallocenter of UreC. The UreE protein probably delivers the nickel.

The protein resides in the cytoplasm. In terms of biological role, required for maturation of urease via the functional incorporation of the urease nickel metallocenter. This is Urease accessory protein UreD from Synechococcus sp. (strain RCC307).